A 206-amino-acid chain; its full sequence is MASQKKQLFKIIILGDSGVGKTSLMNQYVNARFTQQYRATVGADFMAKEVMIDDRMVTLQIWDTAGQERFQSLGGAFYRGADCCVLVYDITNPKSFDSLDSWRDEFLMQGQPKDPEHFPFVVLGNKLDKATERKVQESKAQQWCKSHGNIQFFEVSAKDATNIEQAFQDIAKAAASQEKDEEIFFPTTVTLTKQSQKPQAKQGGCC.

Residue 15–22 (GDSGVGKT) participates in GTP binding. Residues serine 17 and serine 23 each carry the phosphoserine modification. Threonine 34, threonine 40, and threonine 64 each carry phosphothreonine. GTP is bound by residues 34 to 40 (TQQYRAT) and 63 to 67 (DTAGQ). Residues 37–45 (YRATVGADF) carry the Effector region motif. Serine 72 is subject to Phosphoserine. Phosphotyrosine is present on residues tyrosine 78 and tyrosine 88. GTP-binding positions include 125–128 (NKLD) and 157–158 (AK). 2 S-geranylgeranyl cysteine lipidation sites follow: cysteine 205 and cysteine 206.

Belongs to the small GTPase superfamily. Rab family.

The protein localises to the cytoplasmic vesicle. It is found in the phagosome membrane. It localises to the late endosome membrane. The protein resides in the lysosome membrane. Its subcellular location is the autophagosome membrane. The protein localises to the lipid droplet. It catalyses the reaction GTP + H2O = GDP + phosphate + H(+). In terms of biological role, small GTPase which cycles between active GTP-bound and inactive GDP-bound states. In its active state, binds to a variety of effector proteins playing a key role in the regulation of endo-lysosomal trafficking. Governs early-to-late endosomal maturation, microtubule minus-end as well as plus-end directed endosomal migration and positioning, and endosome-lysosome transport through different protein-protein interaction cascades. Involved in lipophagy, a cytosolic lipase-independent autophagic pathway. Plays a role in phagocyte formation and acidification. This Paramecium octaurelia protein is Ras-related protein Rab-7a.